We begin with the raw amino-acid sequence, 425 residues long: Enolase (425 aa).

Q162 serves as a coordination point for (2R)-2-phosphoglycerate. Catalysis depends on E204, which acts as the Proton donor. Mg(2+) contacts are provided by D241, E282, and D309. Residues K334, R363, S364, and K385 each contribute to the (2R)-2-phosphoglycerate site. Residue K334 is the Proton acceptor of the active site.

The protein belongs to the enolase family. Requires Mg(2+) as cofactor.

The protein localises to the cytoplasm. Its subcellular location is the secreted. It is found in the cell surface. The enzyme catalyses (2R)-2-phosphoglycerate = phosphoenolpyruvate + H2O. It functions in the pathway carbohydrate degradation; glycolysis; pyruvate from D-glyceraldehyde 3-phosphate: step 4/5. Its function is as follows. Catalyzes the reversible conversion of 2-phosphoglycerate (2-PG) into phosphoenolpyruvate (PEP). It is essential for the degradation of carbohydrates via glycolysis. This is Enolase from Corynebacterium aurimucosum (strain ATCC 700975 / DSM 44827 / CIP 107346 / CN-1) (Corynebacterium nigricans).